Here is a 704-residue protein sequence, read N- to C-terminus: Acetyl-coenzyme A synthetase 1 (704 aa).

CoA contacts are provided by residues 239–242 (RGGK) and Thr358. Residues 434–436 (GEP), 458–463 (DTYWQT), Asp550, and Arg565 each bind ATP. Ser573 is a CoA binding site. Arg576 contacts ATP. Position 641 (Arg641) interacts with CoA. The Microbody targeting signal motif lies at 702-704 (VKL).

The protein belongs to the ATP-dependent AMP-binding enzyme family.

Its subcellular location is the microsome. It localises to the endoplasmic reticulum. The enzyme catalyses acetate + ATP + CoA = acetyl-CoA + AMP + diphosphate. The protein is Acetyl-coenzyme A synthetase 1 (ACS1) of Candida glabrata (strain ATCC 2001 / BCRC 20586 / JCM 3761 / NBRC 0622 / NRRL Y-65 / CBS 138) (Yeast).